Consider the following 194-residue polypeptide: Peptidyl-tRNA hydrolase (194 aa).

Residue Tyr16 participates in tRNA binding. Catalysis depends on His21, which acts as the Proton acceptor. Residues Phe67, Asn69, and Asn115 each coordinate tRNA.

This sequence belongs to the PTH family. Monomer.

It is found in the cytoplasm. It carries out the reaction an N-acyl-L-alpha-aminoacyl-tRNA + H2O = an N-acyl-L-amino acid + a tRNA + H(+). In terms of biological role, hydrolyzes ribosome-free peptidyl-tRNAs (with 1 or more amino acids incorporated), which drop off the ribosome during protein synthesis, or as a result of ribosome stalling. Catalyzes the release of premature peptidyl moieties from peptidyl-tRNA molecules trapped in stalled 50S ribosomal subunits, and thus maintains levels of free tRNAs and 50S ribosomes. The protein is Peptidyl-tRNA hydrolase of Escherichia coli O17:K52:H18 (strain UMN026 / ExPEC).